Reading from the N-terminus, the 149-residue chain is uncharacterized protein (149 aa).

Residues 124–144 (IIIIALIIILANYAPSIIGKI) traverse the membrane as a helical segment.

This sequence belongs to the M.jannaschii MJ0023/MJ0349/MJ1072/MJ1074/MJ1107/MJECL16 family.

It localises to the membrane. This is an uncharacterized protein from Methanocaldococcus jannaschii (strain ATCC 43067 / DSM 2661 / JAL-1 / JCM 10045 / NBRC 100440) (Methanococcus jannaschii).